A 940-amino-acid chain; its full sequence is Inter-alpha-trypsin inhibitor heavy chain H5 (940 aa).

A signal peptide spans 1–16 (MLPLLGLCFALPLCAG). Residues 35-161 (IPRQVRLLQR…KAAFLLSYEE (127 aa)) form the VIT domain. Asn-97 and Asn-127 each carry an N-linked (GlcNAc...) asparagine glycan. The tract at residues 207–227 (NSRQRGSGRGPDDSGPPPSTV) is disordered. 6 N-linked (GlcNAc...) asparagine glycosylation sites follow: Asn-231, Asn-421, Asn-508, Asn-694, Asn-778, and Asn-795. In terms of domain architecture, VWFA spans 295 to 478 (NVVFVLDSSA…AQLIGFYDEI (184 aa)).

This sequence belongs to the ITIH family.

The protein localises to the secreted. In terms of biological role, may act as a tumor suppressor. This Bos taurus (Bovine) protein is Inter-alpha-trypsin inhibitor heavy chain H5 (ITIH5).